The sequence spans 161 residues: RNA pyrophosphohydrolase (161 aa).

Residues 6-149 (GFRPNVGIIL…KRDVYRKAMV (144 aa)) form the Nudix hydrolase domain. Positions 38 to 59 (GGIQFGETPEQALFRELREEIG) match the Nudix box motif.

Belongs to the Nudix hydrolase family. RppH subfamily. A divalent metal cation serves as cofactor.

In terms of biological role, accelerates the degradation of transcripts by removing pyrophosphate from the 5'-end of triphosphorylated RNA, leading to a more labile monophosphorylated state that can stimulate subsequent ribonuclease cleavage. The chain is RNA pyrophosphohydrolase from Acinetobacter baumannii (strain AB307-0294).